The chain runs to 376 residues: Putative glutamate--cysteine ligase 2-1 (376 aa).

Belongs to the glutamate--cysteine ligase type 2 family. YbdK subfamily.

It catalyses the reaction L-cysteine + L-glutamate + ATP = gamma-L-glutamyl-L-cysteine + ADP + phosphate + H(+). Functionally, ATP-dependent carboxylate-amine ligase which exhibits weak glutamate--cysteine ligase activity. The chain is Putative glutamate--cysteine ligase 2-1 from Mycobacterium sp. (strain KMS).